A 182-amino-acid polypeptide reads, in one-letter code: Ribosome-recycling factor (182 aa).

The protein belongs to the RRF family.

The protein resides in the cytoplasm. Functionally, responsible for the release of ribosomes from messenger RNA at the termination of protein biosynthesis. May increase the efficiency of translation by recycling ribosomes from one round of translation to another. The chain is Ribosome-recycling factor from Prochlorococcus marinus (strain MIT 9312).